Reading from the N-terminus, the 147-residue chain is Large ribosomal subunit protein uL15 (147 aa).

The protein belongs to the universal ribosomal protein uL15 family. In terms of assembly, part of the 50S ribosomal subunit.

Binds to the 23S rRNA. This Blochmanniella floridana protein is Large ribosomal subunit protein uL15.